A 237-amino-acid chain; its full sequence is Phosphatidylserine decarboxylase proenzyme (237 aa).

Catalysis depends on Ser206, which acts as the Schiff-base intermediate with substrate; via pyruvic acid. Ser206 is subject to Pyruvic acid (Ser); by autocatalysis.

It belongs to the phosphatidylserine decarboxylase family. PSD-A subfamily. In terms of assembly, heterodimer of a large membrane-associated beta subunit and a small pyruvoyl-containing alpha subunit. It depends on pyruvate as a cofactor. Post-translationally, is synthesized initially as an inactive proenzyme. Formation of the active enzyme involves a self-maturation process in which the active site pyruvoyl group is generated from an internal serine residue via an autocatalytic post-translational modification. Two non-identical subunits are generated from the proenzyme in this reaction, and the pyruvate is formed at the N-terminus of the alpha chain, which is derived from the carboxyl end of the proenzyme. The post-translation cleavage follows an unusual pathway, termed non-hydrolytic serinolysis, in which the side chain hydroxyl group of the serine supplies its oxygen atom to form the C-terminus of the beta chain, while the remainder of the serine residue undergoes an oxidative deamination to produce ammonia and the pyruvoyl prosthetic group on the alpha chain.

It is found in the cell membrane. It carries out the reaction a 1,2-diacyl-sn-glycero-3-phospho-L-serine + H(+) = a 1,2-diacyl-sn-glycero-3-phosphoethanolamine + CO2. It functions in the pathway phospholipid metabolism; phosphatidylethanolamine biosynthesis; phosphatidylethanolamine from CDP-diacylglycerol: step 2/2. Its function is as follows. Catalyzes the formation of phosphatidylethanolamine (PtdEtn) from phosphatidylserine (PtdSer). This Nocardia farcinica (strain IFM 10152) protein is Phosphatidylserine decarboxylase proenzyme.